A 296-amino-acid polypeptide reads, in one-letter code: Mycothiol acetyltransferase (296 aa).

N-acetyltransferase domains follow at residues 1 to 148 and 151 to 296; these read MTEW…IRVD and VTVR…YGRA. A 1D-myo-inositol 2-(L-cysteinylamino)-2-deoxy-alpha-D-glucopyranoside-binding site is contributed by glutamate 34. Residues 79-81 and 87-92 each bind acetyl-CoA; these read LVV and RRGIGS. 3 residues coordinate 1D-myo-inositol 2-(L-cysteinylamino)-2-deoxy-alpha-D-glucopyranoside: glutamate 178, lysine 219, and glutamate 229. Residues 233-235 and 240-246 contribute to the acetyl-CoA site; these read VGV and QGRGLGH. 1D-myo-inositol 2-(L-cysteinylamino)-2-deoxy-alpha-D-glucopyranoside is bound at residue tyrosine 267. Position 272-277 (272-277) interacts with acetyl-CoA; the sequence is NQAALR.

This sequence belongs to the acetyltransferase family. MshD subfamily. Monomer.

The enzyme catalyses 1D-myo-inositol 2-(L-cysteinylamino)-2-deoxy-alpha-D-glucopyranoside + acetyl-CoA = mycothiol + CoA + H(+). Functionally, catalyzes the transfer of acetyl from acetyl-CoA to desacetylmycothiol (Cys-GlcN-Ins) to form mycothiol. The protein is Mycothiol acetyltransferase of Mycobacteroides abscessus (strain ATCC 19977 / DSM 44196 / CCUG 20993 / CIP 104536 / JCM 13569 / NCTC 13031 / TMC 1543 / L948) (Mycobacterium abscessus).